We begin with the raw amino-acid sequence, 42 residues long: Cytochrome b559 subunit beta (42 aa).

The helical transmembrane segment at 17–33 (WLTIHALAVPTVFFLGA) threads the bilayer. His-21 is a heme binding site.

Belongs to the PsbE/PsbF family. As to quaternary structure, heterodimer of an alpha subunit and a beta subunit. PSII is composed of 1 copy each of membrane proteins PsbA, PsbB, PsbC, PsbD, PsbE, PsbF, PsbH, PsbI, PsbJ, PsbK, PsbL, PsbM, PsbT, PsbX, PsbY, PsbZ, Psb30/Ycf12, at least 3 peripheral proteins of the oxygen-evolving complex and a large number of cofactors. It forms dimeric complexes. Heme b is required as a cofactor.

The protein localises to the plastid. Its subcellular location is the chloroplast thylakoid membrane. Functionally, this b-type cytochrome is tightly associated with the reaction center of photosystem II (PSII). PSII is a light-driven water:plastoquinone oxidoreductase that uses light energy to abstract electrons from H(2)O, generating O(2) and a proton gradient subsequently used for ATP formation. It consists of a core antenna complex that captures photons, and an electron transfer chain that converts photonic excitation into a charge separation. The sequence is that of Cytochrome b559 subunit beta from Emiliania huxleyi (Coccolithophore).